The sequence spans 104 residues: UPF0145 protein Hlac_1015 (104 aa).

The protein belongs to the UPF0145 family.

This Halorubrum lacusprofundi (strain ATCC 49239 / DSM 5036 / JCM 8891 / ACAM 34) protein is UPF0145 protein Hlac_1015.